Reading from the N-terminus, the 272-residue chain is MMACHC-like protein (272 aa).

Substrate is bound by residues Asp121, 132-135 (ILMQ), and 146-148 (YYQ).

It belongs to the MMACHC family. The cofactor is FAD. It depends on FMN as a cofactor.

The protein localises to the cytoplasm. Its function is as follows. Catalyzes the reductive dealkylation of cyanocobalamin to cob(II)alamin, using FAD or FMN as cofactor and NADPH as cosubstrate. Can also catalyze the glutathione-dependent reductive demethylation of methylcobalamin, and, with much lower efficiency, the glutathione-dependent reductive demethylation of adenosylcobalamin. Under anaerobic conditions cob(I)alamin is the first product; it is highly reactive and is converted to aquocob(II)alamin in the presence of oxygen. Binds cyanocobalamin, adenosylcobalamin, methylcobalamin and other, related vitamin B12 derivatives. This Caenorhabditis elegans protein is MMACHC-like protein (cblc-1).